Consider the following 179-residue polypeptide: Large ribosomal subunit protein uL5 (179 aa).

It belongs to the universal ribosomal protein uL5 family. As to quaternary structure, part of the 50S ribosomal subunit; contacts the 5S rRNA and probably tRNA. Forms a bridge to the 30S subunit in the 70S ribosome.

Functionally, this is one of the proteins that bind and probably mediate the attachment of the 5S RNA into the large ribosomal subunit, where it forms part of the central protuberance. In the 70S ribosome it contacts protein S13 of the 30S subunit (bridge B1b), connecting the 2 subunits; this bridge is implicated in subunit movement. May contact the P site tRNA; the 5S rRNA and some of its associated proteins might help stabilize positioning of ribosome-bound tRNAs. The sequence is that of Large ribosomal subunit protein uL5 from Pyrobaculum aerophilum (strain ATCC 51768 / DSM 7523 / JCM 9630 / CIP 104966 / NBRC 100827 / IM2).